We begin with the raw amino-acid sequence, 426 residues long: Zinc finger CCCH domain-containing protein 15 (426 aa).

Positions 1–12 (MPPKKQAQAGGS) are enriched in low complexity. 2 disordered regions span residues 1 to 30 (MPPKKQAQAGGSKKAEQKKKEKIIEDKTFG) and 53 to 74 (GQQNPRQVAQSEAEKKLKKDDK). Basic and acidic residues predominate over residues 13-29 (KKAEQKKKEKIIEDKTF). Residues 53–62 (GQQNPRQVAQ) are compositionally biased toward polar residues. Positions 61–86 (AQSEAEKKLKKDDKKKELQELNELFK) form a coiled coil. A compositionally biased stretch (basic and acidic residues) spans 64-74 (EAEKKLKKDDK). C3H1-type zinc fingers lie at residues 99–126 (DPKSVVCAFFKQGQCTKGDKCKFSHDLT) and 174–212 (PKTQIVCKHFLEAIENNKYGWFWVCPGGGDICMYRHALP). Residues 218 to 285 (KKDKKKEEKE…RRKADFKAGK (68 aa)) are a coiled coil. Serine 231 is modified (phosphoserine). Residues 236 to 260 (IERERSALGPNVTKITLESFLAWKK) are required for interaction with DRG1. The tract at residues 299 to 326 (PELVNDDDEEADDTRYTQGTGGDEVDDS) is disordered. Residues serine 351, serine 360, and serine 381 each carry the phosphoserine modification. The interval 358–411 (YTSDKDENKLSEASGGRAENGERSDLEEDNEREGTENGAIDAVPVDENLFTGED) is disordered.

This sequence belongs to the ZC3H15/TMA46 family. Interacts with DRG1; this interaction prevents DRG1 poly-ubiquitination and degradation by proteasome. DRG1-ZC3H15/DFRP1 complex co-sediments with polysomes. Associates with microtubules.

Its subcellular location is the cytoplasm. The protein localises to the nucleus. Protects DRG1 from proteolytic degradation. Stimulates DRG1 GTPase activity likely by increasing the affinity for the potassium ions. In Homo sapiens (Human), this protein is Zinc finger CCCH domain-containing protein 15 (ZC3H15).